Here is an 80-residue protein sequence, read N- to C-terminus: Toxin Acra I-2 (80 aa).

Positions 1–22 (MMKLALFSIIVILFSLIGSIHG) are cleaved as a signal peptide. An LCN-type CS-alpha/beta domain is found at 25 to 80 (VPGNYPLDSSGNKYPCTVLGDNQSCIDVCKKHGVKYGYCYSFKCWCEFLEDKNVSI). 3 disulfide bridges follow: C40–C63, C49–C68, and C53–C70.

As to expression, expressed by the venom gland.

The protein resides in the secreted. Probable neurotoxin that inhibits ion channels. Is toxic to mice. Is about 2.8% of the total protein in the venom. This Androctonus crassicauda (Arabian fat-tailed scorpion) protein is Toxin Acra I-2.